A 65-amino-acid polypeptide reads, in one-letter code: Large ribosomal subunit protein bL35 (65 aa).

The protein belongs to the bacterial ribosomal protein bL35 family.

In Stenotrophomonas maltophilia (strain R551-3), this protein is Large ribosomal subunit protein bL35.